The following is a 123-amino-acid chain: Protein HesB, heterocyst (123 aa).

It belongs to the HesB/IscA family.

Its function is as follows. May be required for efficient nitrogen fixation. In Trichormus variabilis (strain ATCC 29413 / PCC 7937) (Anabaena variabilis), this protein is Protein HesB, heterocyst (hesB1).